We begin with the raw amino-acid sequence, 483 residues long: Fructose-like PTS system EIIBC component (483 aa).

Positions 1 to 105 constitute a PTS EIIB type-2 domain; that stretch reads MESSLRIVAI…IDQIFSELPT (105 aa). The Phosphocysteine intermediate; for EIIB activity role is filled by C13. At C13 the chain carries Phosphocysteine; by EIIA. The 348-residue stretch at 128 to 475 folds into the PTS EIIC type-2 domain; it reads VMSHLMAGVS…LWLRRKAKAA (348 aa). 10 helical membrane passes run 132–152, 180–200, 204–224, 227–247, 264–284, 303–323, 344–364, 380–400, 402–422, and 442–462; these read LMAGVSAALPFVIGGGILVAL, IGYLGFTFMIPIMGAYIASSI, PAFAPAFLVCYLANDKALLGT, GAGFLGAVVLGLAIGYFVFWF, LIPFVTLLVFGVLTYYVIGPV, MKFAAAFLVGAMLAFDMGGPI, AIVGVVALMPPVAAGLATFIA, IVVGATVATEPAIPYALAAPL, MITANTLAGGITGVLVIAFGI, and VGSFYLVLAIGLALNISFIIV.

The protein localises to the cell inner membrane. It catalyses the reaction D-fructose(out) + N(pros)-phospho-L-histidyl-[protein] = D-fructose 1-phosphate(in) + L-histidyl-[protein]. Its function is as follows. The phosphoenolpyruvate-dependent sugar phosphotransferase system (sugar PTS), a major carbohydrate active transport system, catalyzes the phosphorylation of incoming sugar substrates concomitantly with their translocation across the cell membrane. The enzyme II FrvAB PTS system is involved in fructose transport. The sequence is that of Fructose-like PTS system EIIBC component from Escherichia coli (strain K12).